The primary structure comprises 243 residues: HTH-type transcriptional regulator MlrA (243 aa).

An HTH merR-type domain is found at 3–72 (LYTIGEVALL…VSKVKMLLSN (70 aa)). The segment at residues 6–25 (IGEVALLCDINPVTLRAWQR) is a DNA-binding region (H-T-H motif).

Interacts with DgcM and PdeR.

Its activity is regulated as follows. Activity is regulated by DgcM and PdeR. In terms of biological role, activates transcription of csgD, the master regulator of biofilm formation, by binding to its promoter region. Also controls the transcription of cadC and ibaG. Part of a signaling cascade that regulates curli biosynthesis. The cascade is composed of two c-di-GMP control modules, in which c-di-GMP controlled by the DgcE/PdeH pair (module I) regulates the activity of the DgcM/PdeR pair (module II), which in turn regulates activity of the transcription factor MlrA. This is HTH-type transcriptional regulator MlrA from Escherichia coli (strain K12).